The sequence spans 309 residues: tRNA dimethylallyltransferase 1 (309 aa).

14 to 21 (GPTASGKS) is an ATP binding site. 16-21 (TASGKS) lines the substrate pocket. An interaction with substrate tRNA region spans residues 39 to 42 (DSMQ).

Belongs to the IPP transferase family. In terms of assembly, monomer. The cofactor is Mg(2+).

The catalysed reaction is adenosine(37) in tRNA + dimethylallyl diphosphate = N(6)-dimethylallyladenosine(37) in tRNA + diphosphate. Catalyzes the transfer of a dimethylallyl group onto the adenine at position 37 in tRNAs that read codons beginning with uridine, leading to the formation of N6-(dimethylallyl)adenosine (i(6)A). The polypeptide is tRNA dimethylallyltransferase 1 (Pelobacter propionicus (strain DSM 2379 / NBRC 103807 / OttBd1)).